A 185-amino-acid polypeptide reads, in one-letter code: MKIKEIIVVEGKDDTVAIKRAVDADTIETNGSAIGDHVIEQVKLALQKRGVIIFTDPDYPGERIRKIISDKVPGCKHAFLPKEEALAKRKKGVGIEHASNESIRRALENIHEEMEAYTSEISWSDLVDAGLVGGEMAKSRRERMGKLLKIGYTNAKQLHKRLQMFQVSKESFAEAYKQVIQEERK.

The region spanning 4–87 (KEIIVVEGKD…AFLPKEEALA (84 aa)) is the Toprim domain. Mg(2+) contacts are provided by E10, D56, and D58.

It belongs to the ribonuclease M5 family. Mg(2+) serves as cofactor.

It localises to the cytoplasm. It carries out the reaction Endonucleolytic cleavage of RNA, removing 21 and 42 nucleotides, respectively, from the 5'- and 3'-termini of a 5S-rRNA precursor.. Its function is as follows. Required for correct processing of both the 5' and 3' ends of 5S rRNA precursor. Cleaves both sides of a double-stranded region yielding mature 5S rRNA in one step. The chain is Ribonuclease M5 from Bacillus anthracis.